We begin with the raw amino-acid sequence, 857 residues long: Putative disease resistance protein At1g50180 (857 aa).

Residues 27–60 (IGDQVKQLQDELKRLNCFLKDADEKQHESERVRN) adopt a coiled-coil conformation. The 314-residue stretch at 148 to 461 (SLREQRQSFP…AEGMVMPVKH (314 aa)) folds into the NB-ARC domain. Residue 192–199 (GMGGLGKT) participates in ATP binding. LRR repeat units lie at residues 653 to 678 (MTSL…SLSK), 680 to 703 (LKRL…DVTQ), 754 to 780 (LPNL…NLEN), and 791 to 816 (MMRL…RFLK).

This sequence belongs to the disease resistance NB-LRR family.

Potential disease resistance protein. The chain is Putative disease resistance protein At1g50180 from Arabidopsis thaliana (Mouse-ear cress).